Here is a 1285-residue protein sequence, read N- to C-terminus: Transmembrane channel-like protein 1 (1285 aa).

Positions 1 to 29 (MQEAARRASLRKEHTPTNEKFGDLSKQDS) are disordered. The Cytoplasmic segment spans residues 1–164 (MQEAARRASL…KIKRIESHFG (164 aa)). The helical transmembrane segment at 165–202 (SVVSSYFTFLRWIVFVNIMITLIALVFVVLPETLADSV) threads the bilayer. Topologically, residues 203-260 (ANEGRFNRTKTRKQIPANERVHADELAVVWHYDGYLRYSPLFYGYYSDDPFLGNKIKY) are extracellular. Asn-209 carries an N-linked (GalNAc...) asparagine glycan. Residues 261–292 (ALPLAYFMVTLTIFAYSFFAILRKMAANARMS) traverse the membrane as a helical segment. The Cytoplasmic portion of the chain corresponds to 293-349 (KLSGSKAEQYIFNWKLFTGWDYTIGNSETASNTVMAVVIKLRESIADIKKDAHGKFR). Residues 350-381 (LLQFSLRVFANIIICAMLGFSIYCIIFAVQKS) form a helical membrane-spanning segment. The Extracellular segment spans residues 382–388 (QVQDDGN). Residues 389–416 (LFTKNQVPSVVSTITHVFPMIFDLIGKM) form a helical membrane-spanning segment. The Cytoplasmic portion of the chain corresponds to 417–420 (ENYH). A helical transmembrane segment spans residues 421–455 (PRTALRAHLGRVLILYTVNYITLIFALFEKMTALR). Topologically, residues 456–667 (DRVNSTSTSS…NHDGHNNDIC (212 aa)) are extracellular. The disordered stretch occupies residues 458–488 (VNSTSTSSSHRTKRQQGGWNPNMQRPPPYAS). Cysteines 667 and 816 form a disulfide. Residues 668–705 (WETIIGQEIVKLVTMDLIFTILSILVIDLFRGLWIKYC) form a helical membrane-spanning segment. The interval 696-720 (LFRGLWIKYCSSWWCWDIETTFPEY) is required for interaction with tmie. At 706–724 (SSWWCWDIETTFPEYGEFK) the chain is on the cytoplasmic side. The helical transmembrane segment at 725-745 (VAENVLHIINNQGMIWLGLFF) threads the bilayer. Topologically, residues 746–748 (APL) are extracellular. A helical membrane pass occupies residues 749–771 (LPAINNIKLIILMYIRGWAVMTC). A required for interaction with tmie region spans residues 766 to 773 (WAVMTCNV). Residues 772-785 (NVPAREIFRASRSS) lie on the Cytoplasmic side of the membrane. A helical membrane pass occupies residues 786-809 (NFYLGILLIWLLLCTLPVGFVIAS). The Extracellular portion of the chain corresponds to 810-852 (MSPSRSCGPFARYQHFYTVVTREIEKRVDQTVLSYIRHIASPG). Residues 853 to 886 (VVIPIILFLILIIYFLFSLVRGLREANTDLQAQL) traverse the membrane as a helical segment. At 887 to 1285 (VHERTEEKKK…DEDDSPRQID (399 aa)) the chain is on the cytoplasmic side. Disordered regions lie at residues 940 to 962 (ADHALASDSSEESDINEDEDDER) and 1114 to 1285 (TIKE…RQID). Residues 948–961 (SSEESDINEDEDDE) are compositionally biased toward acidic residues. Basic and acidic residues-rich tracts occupy residues 1121-1131 (DPGKSDKKQTS), 1146-1156 (DEARALREKMK), and 1167-1182 (TVEEKPKGGKSSESEF). The segment covering 1197-1208 (TEEENEEEETDS) has biased composition (acidic residues).

It belongs to the TMC family. As to quaternary structure, homodimer. Interacts with calm-1 and tmie to form the MET channel. As to expression, expressed in the ASH polymodal avoidance neurons. Also expressed in other sensory neurons, including the ADF, ASE, ADL, AQR, PQR, URX and PHA cells.

It localises to the cell membrane. It catalyses the reaction Na(+)(in) = Na(+)(out). The enzyme catalyses Ca(2+)(in) = Ca(2+)(out). The catalysed reaction is K(+)(in) = K(+)(out). In terms of biological role, pore-forming subunit of the mechanotransducer (MET) non-selective cation channel complex. The MET complex is composed of symmetric dimeric MET channels, each channel comprising two copies of pore-forming ion-conducting transmembrane TMC subunits and auxiliary proteins including the transmembrane inner ear protein/tmie, the calcium-binding protein/calm-1 and arrestin domain protein arrd-6. Sodium ions are the most permeable, whereas calcium and potassium have lower indices. Sodium-sensor ion channel that acts specifically in salt taste chemosensation. Required for salt-evoked neuronal activity and behavioral avoidance of high concentrations of NaCl. The chain is Transmembrane channel-like protein 1 (tmc-1) from Caenorhabditis elegans.